Reading from the N-terminus, the 545-residue chain is Mitogen-activated protein kinase kinase kinase mom-4 (545 aa).

Low complexity predominate over residues 1 to 21 (MDTSPHSKPSSSSASQSSHSP). The interval 1–35 (MDTSPHSKPSSSSASQSSHSPSPAPVTAPRKTRDS) is disordered. One can recognise a Protein kinase domain in the interval 53-308 (NLNSHQLGRG…AECLQYFTAL (256 aa)). ATP is bound by residues 59-67 (LGRGTYGIV) and Lys-86. The active-site Proton acceptor is the Asp-178. Residues 316–444 (NVPLADANTN…PIDDRRDSNE (129 aa)) form a disordered region. Composition is skewed to polar residues over residues 352 to 369 (NGRT…QAVN) and 396 to 411 (ASSS…QSEA).

It belongs to the protein kinase superfamily. STE Ser/Thr protein kinase family. MAP kinase kinase kinase subfamily. Interacts with, and is activated by, tap-1. Requires Mg(2+) as cofactor.

The enzyme catalyses L-seryl-[protein] + ATP = O-phospho-L-seryl-[protein] + ADP + H(+). It carries out the reaction L-threonyl-[protein] + ATP = O-phospho-L-threonyl-[protein] + ADP + H(+). Part of the Wnt signaling pathway essential for the specification of the mesodermal cell fate in early embryos. Stimulates the wrm-1/lit-1-dependent phosphorylation of pop-1 and plays a role in the initial nuclear accumulation of wrm-1. This Caenorhabditis briggsae protein is Mitogen-activated protein kinase kinase kinase mom-4.